The chain runs to 1141 residues: MFCLCLSLLGLLLCWPAATRNLLELKVECPHTIGLGQGIVIGSAELPPVPLAKVESLKLESSCNFDLHTSTAAQQAFTKWSWEKKADTAENAKAASTTFQSSSKEVQLRGLCVIPTLVLETASRTRKTVTCFDLSCNQTVCQPTVYLMAPIQTCVTTKSCLLGLGDQRIQVVYEKTYCVSGQLIEGNCFNPLHTIAISQPTHTYDIMTLAVHCFFISKKGGTDDTLKIEKQFETLVEKTGCTENALKGYYACILGTSSEVVYVPAMDDYRSSEILSRMTTAPHGEDHDIDPNAISSLRIVGQLTGKAPSTESSDTVQGIAFAGTPLYTSTSILVRKEDPIYLWSPGIIPEGNHSQCDKKTLPLTWTGFITLPGEIEKTTQCTVFCTLSGPGADCEAYSDTGIFNISSPTCLVNRVQRFRGAEQQVKFVCQRVDLDITVYCNGVKKVILTKTLVIGQCIYTFTSIFSLMPGVAHSLAVELCVPGLHGWATISLLITFCFGWLAIPLLSMIIIRFLLIFTYLCSKYSTDSKFKLIIEKVKQEYQKTMGSMVCEVCQQGCETAKELESHKKSCPHGQCPYCLNPTEATESALQAHFKVCKLTTRFQENLKKSLSTYEPKRGLYRTLSMFRYKSKCYVGLVWCILLTMELIVWAASAETINLEPGWTDTAHGSGIIPLKTDLELDFSLPSSATYTYRRELQNPANEQEKIPFHFQMERQVIHAEIQHLGHWMDGTFNLKTAFHCYGSCIKYAYPWQTAKCFLEKDFEFETGWGCNPPDCPGVGTGCTACGVYLDKLRSVGKVYKILSLKYTRKVCIQLGTEQTCKTIDSNDCLVTTSVKVCMIGTISKFQPGDTLLFLGPLEEGGMIFKQWCTTTCQFGDPGDIMSTPLGMKCPEHAGSFRKKCSFATLPSCQYDGNTVSGYQRMIATKDSFQSFNITEPHITTNSLEWVDPDSSLKDHVNLIVNRDLSFQDLAENPCQVDLSVSSIDGAWGSGVGFNLVCSVSLTECASFLTSIKACDSAMCYGSSTANLVRGQNTVHVVGKGGHSGSKFMCCHDKKCSATGLVAAAPHLDRVTGYNQIDTNKVFDDGAPQCGVHCWFKKSGEWLLGILSGNWMVVAVLIALFIFSLLLFSLCCPRRQNYKKNK.

An N-terminal signal peptide occupies residues 1 to 19; that stretch reads MFCLCLSLLGLLLCWPAAT. Over 20–489 the chain is Lumenal; that stretch reads RNLLELKVEC…CVPGLHGWAT (470 aa). 6 disulfides stabilise this stretch: Cys-29–Cys-154, Cys-63–Cys-160, Cys-112–Cys-131, Cys-136–Cys-141, Cys-178–Cys-188, and Cys-213–Cys-252. Asn-137 carries N-linked (GlcNAc...) asparagine; by host glycosylation. Asn-352 is a glycosylation site (N-linked (GlcNAc...) asparagine; by host). Disulfide bonds link Cys-381/Cys-440, Cys-385/Cys-394, Cys-410/Cys-429, and Cys-457/Cys-480. A glycan (N-linked (GlcNAc...) asparagine; by host) is linked at Asn-404. A helical transmembrane segment spans residues 490–510; it reads ISLLITFCFGWLAIPLLSMII. Topologically, residues 511–632 are cytoplasmic; the sequence is IRFLLIFTYL…LSMFRYKSKC (122 aa). The binding to the ribonucleoprotein stretch occupies residues 521-538; the sequence is CSKYSTDSKFKLIIEKVK. CCHC-type zinc fingers lie at residues 550-570 and 575-596; these read CEVCQQGCETAKELESHKKSC and CPYCLNPTEATESALQAHFKVC. Binding to the ribonucleoprotein regions lie at residues 593 to 610, 597 to 608, and 616 to 630; these read FKVCKLTTRFQENLKKSL, KLTTRFQENLKK, and KRGLYRTLSMFRYKS. The segment at 612-653 is inhibition of interferon induction; the sequence is TYEPKRGLYRTLSMFRYKSKCYVGLVWCILLTMELIVWAASA. The 24-residue stretch at 616-639 folds into the ITAM domain; sequence KRGLYRTLSMFRYKSKCYVGLVWC. Tyr-620 and Tyr-633 each carry phosphotyrosine. The YxxL signature appears at 620–623; the sequence is YRTL. The chain crosses the membrane as a helical span at residues 633–653; that stretch reads YVGLVWCILLTMELIVWAASA. Over 654-1109 the chain is Lumenal; that stretch reads ETINLEPGWT…EWLLGILSGN (456 aa). Cystine bridges form between Cys-740-Cys-775, Cys-744-Cys-782, Cys-756-Cys-889, Cys-770-Cys-900, Cys-785-Cys-908, Cys-811-Cys-820, Cys-828-Cys-837, and Cys-868-Cys-872. The tract at residues 762–782 is fusion loop; it reads FEFETGWGCNPPDCPGVGTGC. The N-linked (GlcNAc...) asparagine; by host glycan is linked to Asn-932. Intrachain disulfides connect Cys-974/Cys-1004, Cys-997/Cys-1049, Cys-1014/Cys-1019, Cys-1050/Cys-1055, and Cys-1089/Cys-1093. A helical transmembrane segment spans residues 1110–1130; sequence WMVVAVLIALFIFSLLLFSLC. The binding to the ribonucleoprotein stretch occupies residues 1126 to 1141; it reads LFSLCCPRRQNYKKNK. The Cytoplasmic portion of the chain corresponds to 1131 to 1141; that stretch reads CPRRQNYKKNK.

The protein belongs to the hantavirus envelope glycoprotein family. Homodimer. Homotetramer; forms heterotetrameric Gn-Gc spikes in the pre-fusion conformation. Interacts (via C-terminus) with the nucleoprotein. Interacts with host TUFM; this interaction contributes to the virus-induced degradation of mitochondria by autophagy, which leads to degradation of host MAVS and inhibition of type I interferon (IFN) responses. Interacts with host MAP1LC3B; this interaction contributes to the virus-induced degradation of mitochondria by autophagy, which leads to degradation of host MAVS and inhibition of type I interferon (IFN) responses. As to quaternary structure, homodimer. Homotetramer; forms heterotetrameric Gn-Gc spikes in the pre-fusion conformation. Homotrimer; forms homotrimer in the post-fusion conformation at acidic pH. Interacts (via C-terminus) with the nucleoprotein. Envelope polyprotein precursor is quickly cleaved in vivo just after synthesis, presumably by host signal peptidase.

The protein localises to the virion membrane. Its subcellular location is the host cell surface. It is found in the host Golgi apparatus membrane. It localises to the host endoplasmic reticulum membrane. The protein resides in the host mitochondrion. Its function is as follows. Forms homotetramers with glycoprotein C at the surface of the virion. Attaches the virion to host cell receptors including integrin alpha5/ITGB1. This attachment induces virion internalization predominantly through clathrin-dependent endocytosis. Mediates the assembly and budding of infectious virus particles through its interaction with the nucleocapsid protein and the viral genome. May dysregulate normal immune and endothelial cell responses through an ITAM motif. Translocates to mitochondria, binds to host TUFM and recruits MAP1LC3B. These interactions induce mitochondrial autophagy and therefore destruction of host MAVS leading to inhibition of type I interferon (IFN) responses. Concomitant breakdown of glycoprotein N is apparently prevented by the nucleoprotein that may inhibit Gn-stimulated autophagosome-lysosome fusion. Interacts with the viral genomic RNA. Inhibits the host RIG-I/TBK1 pathway by disrupting the formation of TBK1-TRAF3 complexes and downstream signaling responses required for IFN-beta transcription. In terms of biological role, forms homotetramers with glycoprotein N at the surface of the virion. Attaches the virion to host cell receptors including integrin ITGAV/ITGB3. This attachment induces virion internalization predominantly through clathrin-dependent endocytosis. Class II fusion protein that promotes fusion of viral membrane with host endosomal membrane after endocytosis of the virion. This is Envelopment polyprotein (GP) from Tula orthohantavirus (TULV).